The following is a 309-amino-acid chain: D-alanine--D-alanine ligase (309 aa).

Positions 105–304 (KQIWHSVGLP…FNDLVERILA (200 aa)) constitute an ATP-grasp domain. 135–190 (LQELGGRVIVKPAREGSSIGMSIADNGRSLALALQHAAEFDDDLLVEQWVEGAEYT) provides a ligand contact to ATP. Mg(2+) contacts are provided by Asp-258, Glu-271, and Asn-273.

This sequence belongs to the D-alanine--D-alanine ligase family. Requires Mg(2+) as cofactor. It depends on Mn(2+) as a cofactor.

It is found in the cytoplasm. The catalysed reaction is 2 D-alanine + ATP = D-alanyl-D-alanine + ADP + phosphate + H(+). The protein operates within cell wall biogenesis; peptidoglycan biosynthesis. Functionally, cell wall formation. In Idiomarina loihiensis (strain ATCC BAA-735 / DSM 15497 / L2-TR), this protein is D-alanine--D-alanine ligase.